Here is a 262-residue protein sequence, read N- to C-terminus: 14-3-3 protein homolog (262 aa).

It belongs to the 14-3-3 family.

In Trichoderma harzianum (Hypocrea lixii), this protein is 14-3-3 protein homolog.